We begin with the raw amino-acid sequence, 79 residues long: Dicentracin (79 aa).

A signal peptide spans 1–22 (MKCATLFLVLSMVVLMAEPGDA). Glycine 44 carries the post-translational modification Glycine amide. Residues 47 to 79 (AQQDQQDQQYQQDQQDQQAEQYQRFNRERAAFD) constitute a propeptide that is removed on maturation. The interval 48-67 (QQDQQDQQYQQDQQDQQAEQ) is disordered.

The protein belongs to the pleurocidin family.

It is found in the secreted. The protein is Dicentracin of Dicentrarchus labrax (European seabass).